We begin with the raw amino-acid sequence, 914 residues long: Alanine--tRNA ligase (914 aa).

Residues histidine 608, histidine 612, cysteine 711, and histidine 715 each contribute to the Zn(2+) site.

This sequence belongs to the class-II aminoacyl-tRNA synthetase family. The cofactor is Zn(2+).

It localises to the cytoplasm. It catalyses the reaction tRNA(Ala) + L-alanine + ATP = L-alanyl-tRNA(Ala) + AMP + diphosphate. Its function is as follows. Catalyzes the attachment of alanine to tRNA(Ala) in a two-step reaction: alanine is first activated by ATP to form Ala-AMP and then transferred to the acceptor end of tRNA(Ala). Also edits incorrectly charged Ser-tRNA(Ala) and Gly-tRNA(Ala) via its editing domain. The protein is Alanine--tRNA ligase of Methanoregula boonei (strain DSM 21154 / JCM 14090 / 6A8).